Here is a 552-residue protein sequence, read N- to C-terminus: Putative transport protein Spro_0050 (552 aa).

Helical transmembrane passes span 4-24 (IALT…MGNW), 26-46 (IYGV…VGHF), 65-85 (FGLI…FFSS), 96-116 (FAIL…KLFA), 117-137 (VPLP…PALG), and 158-178 (MGYA…MWLI). 2 consecutive RCK C-terminal domains span residues 192-276 (AFAS…VIGE) and 279-361 (DVSL…IVGN). 6 helical membrane-spanning segments follow: residues 371 to 391 (MLPV…PLFI), 393 to 413 (GFPA…ALIL), 439 to 459 (IVLF…DTLI), 464 to 484 (LAWI…VGVL), 493 to 513 (YLTL…LAFA), and 530 to 550 (VYPL…VLFW).

Belongs to the AAE transporter (TC 2.A.81) family. YidE subfamily.

The protein localises to the cell membrane. This Serratia proteamaculans (strain 568) protein is Putative transport protein Spro_0050.